The chain runs to 467 residues: ATP-dependent protease ATPase subunit HslU (467 aa).

Residues Val-22 and 64–69 each bind ATP; that span reads GVGKTE. The segment at 149–192 is disordered; it reads QTNNPLESLFGGAIPNFGQNNEDEEEPPTEEIKTKRSEIKRQLE. The span at 178-192 shows a compositional bias: basic and acidic residues; the sequence is EEIKTKRSEIKRQLE. ATP is bound by residues Asp-280, Glu-345, and Arg-417.

This sequence belongs to the ClpX chaperone family. HslU subfamily. As to quaternary structure, a double ring-shaped homohexamer of HslV is capped on each side by a ring-shaped HslU homohexamer. The assembly of the HslU/HslV complex is dependent on binding of ATP.

It is found in the cytoplasm. Functionally, ATPase subunit of a proteasome-like degradation complex; this subunit has chaperone activity. The binding of ATP and its subsequent hydrolysis by HslU are essential for unfolding of protein substrates subsequently hydrolyzed by HslV. HslU recognizes the N-terminal part of its protein substrates and unfolds these before they are guided to HslV for hydrolysis. The polypeptide is ATP-dependent protease ATPase subunit HslU (Staphylococcus aureus (strain Mu3 / ATCC 700698)).